We begin with the raw amino-acid sequence, 691 residues long: Elongation factor G (691 aa).

Residues 12–286 enclose the tr-type G domain; the sequence is KKLRNIGIMA…GVLEYLPSPL (275 aa). Residues 21–28, 85–89, and 139–142 each bind GTP; these read AHIDAGKT, DTPGH, and NKMD.

The protein belongs to the TRAFAC class translation factor GTPase superfamily. Classic translation factor GTPase family. EF-G/EF-2 subfamily.

Its subcellular location is the cytoplasm. In terms of biological role, catalyzes the GTP-dependent ribosomal translocation step during translation elongation. During this step, the ribosome changes from the pre-translocational (PRE) to the post-translocational (POST) state as the newly formed A-site-bound peptidyl-tRNA and P-site-bound deacylated tRNA move to the P and E sites, respectively. Catalyzes the coordinated movement of the two tRNA molecules, the mRNA and conformational changes in the ribosome. The sequence is that of Elongation factor G from Thermosipho melanesiensis (strain DSM 12029 / CIP 104789 / BI429).